Reading from the N-terminus, the 78-residue chain is MSTIEERVKKIIVEQLGVKEDEVKNSASFVEDLGADSLDTVELVMALEEEFDTEIPDEEAEKITTVQAAIDFINANQQ.

A Carrier domain is found at Ser2 to Gln77. The residue at position 37 (Ser37) is an O-(pantetheine 4'-phosphoryl)serine.

The protein belongs to the acyl carrier protein (ACP) family. 4'-phosphopantetheine is transferred from CoA to a specific serine of apo-ACP by AcpS. This modification is essential for activity because fatty acids are bound in thioester linkage to the sulfhydryl of the prosthetic group.

Its subcellular location is the cytoplasm. The protein operates within lipid metabolism; fatty acid biosynthesis. Carrier of the growing fatty acid chain in fatty acid biosynthesis. This is Acyl carrier protein from Yersinia pseudotuberculosis serotype O:1b (strain IP 31758).